Reading from the N-terminus, the 82-residue chain is RNA-binding protein Hfq (82 aa).

Positions Asp-10–Val-69 constitute a Sm domain.

This sequence belongs to the Hfq family. In terms of assembly, homohexamer.

RNA chaperone that binds small regulatory RNA (sRNAs) and mRNAs to facilitate mRNA translational regulation in response to envelope stress, environmental stress and changes in metabolite concentrations. Also binds with high specificity to tRNAs. This is RNA-binding protein Hfq from Albidiferax ferrireducens (strain ATCC BAA-621 / DSM 15236 / T118) (Rhodoferax ferrireducens).